A 222-amino-acid polypeptide reads, in one-letter code: Pyridoxine/pyridoxamine 5'-phosphate oxidase (222 aa).

FMN contacts are provided by residues 69 to 74, 84 to 85, lysine 91, and glutamine 113; these read RMVLLK and YT. Lysine 74 contacts substrate. The substrate site is built by tyrosine 131, arginine 135, and serine 139. FMN contacts are provided by residues 148 to 149 and tryptophan 193; that span reads QS. Substrate is bound at residue 199–201; sequence RLH. Arginine 203 lines the FMN pocket.

Belongs to the pyridoxamine 5'-phosphate oxidase family. In terms of assembly, homodimer. FMN is required as a cofactor.

The catalysed reaction is pyridoxamine 5'-phosphate + O2 + H2O = pyridoxal 5'-phosphate + H2O2 + NH4(+). It catalyses the reaction pyridoxine 5'-phosphate + O2 = pyridoxal 5'-phosphate + H2O2. It functions in the pathway cofactor metabolism; pyridoxal 5'-phosphate salvage; pyridoxal 5'-phosphate from pyridoxamine 5'-phosphate: step 1/1. It participates in cofactor metabolism; pyridoxal 5'-phosphate salvage; pyridoxal 5'-phosphate from pyridoxine 5'-phosphate: step 1/1. In terms of biological role, catalyzes the oxidation of either pyridoxine 5'-phosphate (PNP) or pyridoxamine 5'-phosphate (PMP) into pyridoxal 5'-phosphate (PLP). This Maricaulis maris (strain MCS10) (Caulobacter maris) protein is Pyridoxine/pyridoxamine 5'-phosphate oxidase.